The primary structure comprises 79 residues: Large ribosomal subunit protein bL31 (79 aa).

It belongs to the bacterial ribosomal protein bL31 family. Type A subfamily. As to quaternary structure, part of the 50S ribosomal subunit.

Its function is as follows. Binds the 23S rRNA. The chain is Large ribosomal subunit protein bL31 from Nostoc sp. (strain PCC 7120 / SAG 25.82 / UTEX 2576).